Consider the following 49-residue polypeptide: Large ribosomal subunit protein bL33A (49 aa).

It belongs to the bacterial ribosomal protein bL33 family.

This is Large ribosomal subunit protein bL33A from Levilactobacillus brevis (strain ATCC 367 / BCRC 12310 / CIP 105137 / JCM 1170 / LMG 11437 / NCIMB 947 / NCTC 947) (Lactobacillus brevis).